We begin with the raw amino-acid sequence, 559 residues long: 2-succinyl-5-enolpyruvyl-6-hydroxy-3-cyclohexene-1-carboxylate synthase (559 aa).

It belongs to the TPP enzyme family. MenD subfamily. Homodimer. Mg(2+) serves as cofactor. It depends on Mn(2+) as a cofactor. The cofactor is thiamine diphosphate.

It carries out the reaction isochorismate + 2-oxoglutarate + H(+) = 5-enolpyruvoyl-6-hydroxy-2-succinyl-cyclohex-3-ene-1-carboxylate + CO2. Its pathway is quinol/quinone metabolism; 1,4-dihydroxy-2-naphthoate biosynthesis; 1,4-dihydroxy-2-naphthoate from chorismate: step 2/7. The protein operates within quinol/quinone metabolism; menaquinone biosynthesis. Its function is as follows. Catalyzes the thiamine diphosphate-dependent decarboxylation of 2-oxoglutarate and the subsequent addition of the resulting succinic semialdehyde-thiamine pyrophosphate anion to isochorismate to yield 2-succinyl-5-enolpyruvyl-6-hydroxy-3-cyclohexene-1-carboxylate (SEPHCHC). This is 2-succinyl-5-enolpyruvyl-6-hydroxy-3-cyclohexene-1-carboxylate synthase from Cytophaga hutchinsonii (strain ATCC 33406 / DSM 1761 / CIP 103989 / NBRC 15051 / NCIMB 9469 / D465).